The following is a 21-amino-acid chain: GMASKAGQVLGKLAKVAIGAA.

Residue alanine 21 is modified to Alanine amide.

In terms of tissue distribution, expressed by the skin glands.

It is found in the secreted. In terms of biological role, antimicrobial peptide. The chain is Peptide PGLa-BM2 from Xenopus boumbaensis (Mawa clawed frog).